Here is a 147-residue protein sequence, read N- to C-terminus: Ubiquitin-conjugating enzyme E2 D1 (147 aa).

The 147-residue stretch at 1-147 (MALKRIQKEL…AREWTQKYAM (147 aa)) folds into the UBC core domain. The active-site Glycyl thioester intermediate is the C85.

It belongs to the ubiquitin-conjugating enzyme family. In terms of assembly, component of a E3 ubiquitin ligase complex containing UBE2D1, SIAH1, CACYBP/SIP, SKP1, APC and TBL1X. Interacts with RNF11. Autoubiquitinated.

The protein resides in the cytoplasm. The catalysed reaction is S-ubiquitinyl-[E1 ubiquitin-activating enzyme]-L-cysteine + [E2 ubiquitin-conjugating enzyme]-L-cysteine = [E1 ubiquitin-activating enzyme]-L-cysteine + S-ubiquitinyl-[E2 ubiquitin-conjugating enzyme]-L-cysteine.. The enzyme catalyses S-ubiquitinyl-[E1 ubiquitin-activating enzyme]-L-cysteine + [acceptor protein]-L-lysine = [E1 ubiquitin-activating enzyme]-L-cysteine + N(6)-monoubiquitinyl-[acceptor protein]-L-lysine.. Its pathway is protein modification; protein ubiquitination. Accepts ubiquitin from the E1 complex and catalyzes its covalent attachment to other proteins. In vitro catalyzes 'Lys-48'-linked polyubiquitination. Mediates the selective degradation of short-lived and abnormal proteins. Functions in the E6/E6-AP-induced ubiquitination of p53/TP53. Mediates ubiquitination of PEX5 and auto-ubiquitination of STUB1, TRAF6 and TRIM63/MURF1. Ubiquitinates STUB1-associated HSP90AB1 in vitro. Lacks inherent specificity for any particular lysine residue of ubiquitin. Essential for viral activation of IRF3. Mediates polyubiquitination of CYP3A4. This chain is Ubiquitin-conjugating enzyme E2 D1 (UBE2D1), found in Bos taurus (Bovine).